Consider the following 147-residue polypeptide: Hemoglobin subunit delta (147 aa).

One can recognise a Globin domain in the interval 3 to 147 (HLTGEEKAAV…VANALAHKYH (145 aa)). Histidine 64 and histidine 93 together coordinate heme b.

The protein belongs to the globin family. In terms of assembly, heterotetramer of two delta chains and two alpha chains. In terms of tissue distribution, red blood cells.

The polypeptide is Hemoglobin subunit delta (HBD) (Ailuropoda melanoleuca (Giant panda)).